A 318-amino-acid chain; its full sequence is E3 ubiquitin-protein ligase NRDP1 (318 aa).

The segment at 18–57 (CPICSGVLEEPVRAPHCEHAFCNACITQWFAQQQICPVDR) adopts an RING-type; degenerate zinc-finger fold. The SIAH-type; degenerate zinc-finger motif lies at 78-138 (KLQISCDNAG…MPNHNCIKHL (61 aa)).

It carries out the reaction S-ubiquitinyl-[E2 ubiquitin-conjugating enzyme]-L-cysteine + [acceptor protein]-L-lysine = [E2 ubiquitin-conjugating enzyme]-L-cysteine + N(6)-ubiquitinyl-[acceptor protein]-L-lysine.. It functions in the pathway protein modification; protein ubiquitination. In terms of biological role, acts as E3 ubiquitin-protein ligase and regulates the degradation of target proteins. The chain is E3 ubiquitin-protein ligase NRDP1 (rnf41) from Danio rerio (Zebrafish).